The chain runs to 333 residues: Delta(9)-fatty-acid desaturase fat-5 (333 aa).

4 helical membrane passes run 42–62 (NVAL…QLVF), 66–86 (WATV…VTGG), 187–207 (LPLV…VLWG), and 210–230 (AFIA…HATW).

It belongs to the fatty acid desaturase type 1 family. As to expression, expressed in the intestine in adult worms and in all four larval stages. Additional expression in the pharynx and tail cells after hatching and throughout the lifespan.

Its subcellular location is the membrane. It catalyses the reaction hexadecanoyl-CoA + 2 Fe(II)-[cytochrome b5] + O2 + 2 H(+) = (9Z)-hexadecenoyl-CoA + 2 Fe(III)-[cytochrome b5] + 2 H2O. It carries out the reaction tetradecanoyl-CoA + 2 Fe(II)-[cytochrome b5] + O2 + 2 H(+) = (9Z)-tetradecenoyl-CoA + 2 Fe(III)-[cytochrome b5] + 2 H2O. The catalysed reaction is heptadecanoyl-CoA + 2 Fe(II)-[cytochrome b5] + O2 + 2 H(+) = (9Z)-heptadecenoyl-CoA + 2 Fe(III)-[cytochrome b5] + 2 H2O. The enzyme catalyses pentadecanoyl-CoA + 2 Fe(II)-[cytochrome b5] + O2 + 2 H(+) = (9Z)-pentadecenoyl-CoA + 2 Fe(III)-[cytochrome b5] + 2 H2O. Its pathway is lipid metabolism; monounsaturated fatty acid biosynthesis. Functionally, delta(9)-fatty acid desaturase that acts preferentially on palmitoyl-CoA (hexadecanoyl-CoA) producing the monounsaturated palmitoleoyl-CoA ((9Z)-hexadecenoyl-CoA), which can be elongated to (11Z)-octadecenoyl-CoA (the most abundant monounsaturated fatty acid in Caenorhabditis elegans phospholipids and triacylglycerols). Also acts on pentadecanoyl-CoA, heptadecanoyl-CoA and myristoyl-CoA (tetradecanoyl-CoA), the monounsaturated fatty acids (MUFAs) produced are further used as substrates to synthesize polyunsaturated fatty acids (PUFAs) by several other desaturases and elongases. Unlike plants, Caenorhabditis elegans desaturases seem to use fatty acyl-CoAs as substrates. This is Delta(9)-fatty-acid desaturase fat-5 (fat-5) from Caenorhabditis elegans.